The following is a 1659-amino-acid chain: Vitellogenin (1659 aa).

Residues 1–15 form the signal peptide; the sequence is MRAVVLALTLALVAS. In terms of domain architecture, Vitellogenin spans 24–662; sequence FAASKTYVYK…DAATLFPRTV (639 aa). N1089 carries an N-linked (GlcNAc...) asparagine glycan. Composition is skewed to low complexity over residues 1090 to 1111 and 1119 to 1129; these read GTRASSSSSSSSSSSSRSSSSR and SSSSSSSSSSR. Positions 1090 to 1163 are disordered; the sequence is GTRASSSSSS…SQSTSNVISR (74 aa). The 177-residue stretch at 1389-1565 folds into the VWFD domain; the sequence is VKCSMVRDTL…SWVLPSDSCR (177 aa). 2 disulfide bridges follow: C1391/C1528 and C1414/C1564. Residue N1627 is glycosylated (N-linked (GlcNAc...) asparagine).

In terms of processing, phosvitin, an egg yolk storage protein, is one of the most highly phosphorylated (10%) proteins in nature. In terms of tissue distribution, produced by the liver, secreted into the blood and then sequestered by receptor mediated endocytosis into growing oocytes, where it is generally cleaved, giving rise to the respective yolk components lipovitellin-I, phosvitin, lipovitellin-II.

Its function is as follows. Precursor of the major egg-yolk proteins that are sources of nutrients during early development of oviparous organisms. The chain is Vitellogenin (vtg1) from Oncorhynchus mykiss (Rainbow trout).